The sequence spans 61 residues: MALKITQVKGLVGTKPNHRANMESLGLKRIGHSVVKQDTPIIRGMVHKVRHLVTVEEVAGE.

Belongs to the universal ribosomal protein uL30 family. In terms of assembly, part of the 50S ribosomal subunit.

This Corynebacterium aurimucosum (strain ATCC 700975 / DSM 44827 / CIP 107346 / CN-1) (Corynebacterium nigricans) protein is Large ribosomal subunit protein uL30.